A 207-amino-acid polypeptide reads, in one-letter code: Small ribosomal subunit protein uS4 (207 aa).

The tract at residues 32-55 (CKLDSKPGQHGRTSGARTSDYGTQ) is disordered. Polar residues predominate over residues 42–53 (GRTSGARTSDYG). The S4 RNA-binding domain maps to 97–158 (SRLDNVVYRM…TKKKQARILE (62 aa)).

It belongs to the universal ribosomal protein uS4 family. In terms of assembly, part of the 30S ribosomal subunit. Contacts protein S5. The interaction surface between S4 and S5 is involved in control of translational fidelity.

Functionally, one of the primary rRNA binding proteins, it binds directly to 16S rRNA where it nucleates assembly of the body of the 30S subunit. With S5 and S12 plays an important role in translational accuracy. In Paraburkholderia phytofirmans (strain DSM 17436 / LMG 22146 / PsJN) (Burkholderia phytofirmans), this protein is Small ribosomal subunit protein uS4.